The chain runs to 192 residues: Outer-membrane lipoprotein LolB (192 aa).

The signal sequence occupies residues 1-17; the sequence is MTYRTLCILAFTALISA. The N-palmitoyl cysteine moiety is linked to residue Cys-18. Cys-18 carries the S-diacylglycerol cysteine lipid modification.

This sequence belongs to the LolB family. Monomer.

It is found in the cell outer membrane. Its function is as follows. Plays a critical role in the incorporation of lipoproteins in the outer membrane after they are released by the LolA protein. The sequence is that of Outer-membrane lipoprotein LolB from Marinomonas sp. (strain MWYL1).